Consider the following 292-residue polypeptide: Cyclin-dependent kinase 5 homolog (292 aa).

The 282-residue stretch at 4 to 285 (YSKIEKLGEG…AAAALKHPYF (282 aa)) folds into the Protein kinase domain. Residues 10-18 (LGEGTYGIV) and Lys33 each bind ATP. Phosphothreonine is present on Thr14. Phosphotyrosine is present on Tyr15. Asp126 (proton acceptor) is an active-site residue.

This sequence belongs to the protein kinase superfamily. CMGC Ser/Thr protein kinase family. CDC2/CDKX subfamily.

The catalysed reaction is L-seryl-[protein] + ATP = O-phospho-L-seryl-[protein] + ADP + H(+). The enzyme catalyses L-threonyl-[protein] + ATP = O-phospho-L-threonyl-[protein] + ADP + H(+). With respect to regulation, phosphorylation at Thr-14 or Tyr-15 inactivates the enzyme. The sequence is that of Cyclin-dependent kinase 5 homolog (cdk5) from Dictyostelium discoideum (Social amoeba).